A 139-amino-acid chain; its full sequence is 3-hydroxyacyl-[acyl-carrier-protein] dehydratase FabZ (139 aa).

H47 is an active-site residue.

It belongs to the thioester dehydratase family. FabZ subfamily.

It is found in the cytoplasm. The enzyme catalyses a (3R)-hydroxyacyl-[ACP] = a (2E)-enoyl-[ACP] + H2O. Functionally, involved in unsaturated fatty acids biosynthesis. Catalyzes the dehydration of short chain beta-hydroxyacyl-ACPs and long chain saturated and unsaturated beta-hydroxyacyl-ACPs. The protein is 3-hydroxyacyl-[acyl-carrier-protein] dehydratase FabZ of Oenococcus oeni (strain ATCC BAA-331 / PSU-1).